Here is an 81-residue protein sequence, read N- to C-terminus: Relaxin-like protein AGF (81 aa).

Disulfide bonds link cysteine 14-cysteine 66, cysteine 26-cysteine 79, and cysteine 65-cysteine 70. N-linked (GlcNAc...) asparagine glycosylation is present at asparagine 37.

The protein belongs to the insulin family. In terms of assembly, heterodimer of a B chain and an A chain linked by two disulfide bonds.

The protein resides in the secreted. In terms of biological role, uncertain. This Hypanus sabinus (Atlantic stingray) protein is Relaxin-like protein AGF.